The sequence spans 710 residues: Polyribonucleotide nucleotidyltransferase (710 aa).

Residues aspartate 489 and aspartate 495 each contribute to the Mg(2+) site. One can recognise a KH domain in the interval 556 to 615; sequence PKIDTIKIDVDKIKVVIGKGGETIDKIIAETGVKIDIDDEGNVSIYSSDQAAIDRTKEII. The region spanning 625–693 is the S1 motif domain; sequence GEVYHAKVVR…EKGRVDASMK (69 aa). The disordered stretch occupies residues 691-710; the sequence is SMKALIPRPPKPEKKEEKHD. A compositionally biased stretch (basic and acidic residues) spans 700-710; it reads PKPEKKEEKHD.

The protein belongs to the polyribonucleotide nucleotidyltransferase family. The cofactor is Mg(2+).

The protein resides in the cytoplasm. The catalysed reaction is RNA(n+1) + phosphate = RNA(n) + a ribonucleoside 5'-diphosphate. Involved in mRNA degradation. Catalyzes the phosphorolysis of single-stranded polyribonucleotides processively in the 3'- to 5'-direction. This is Polyribonucleotide nucleotidyltransferase from Streptococcus pyogenes serotype M49 (strain NZ131).